Reading from the N-terminus, the 203-residue chain is Glycerol-3-phosphate acyltransferase (203 aa).

Helical transmembrane passes span 12-32 (ATLLCLAFGYLLGSIPFGLIL), 66-86 (TLLLDALKGTAAAAIASLWGV), 88-108 (AGIAAGLAAFLGHLFPVWLSF), 118-138 (IGVLLGLAPLMVPAFAAIWLA), and 159-179 (IALYATGYGKVALLFALMTVI).

This sequence belongs to the PlsY family. Probably interacts with PlsX.

Its subcellular location is the cell inner membrane. The catalysed reaction is an acyl phosphate + sn-glycerol 3-phosphate = a 1-acyl-sn-glycero-3-phosphate + phosphate. It functions in the pathway lipid metabolism; phospholipid metabolism. Its function is as follows. Catalyzes the transfer of an acyl group from acyl-phosphate (acyl-PO(4)) to glycerol-3-phosphate (G3P) to form lysophosphatidic acid (LPA). This enzyme utilizes acyl-phosphate as fatty acyl donor, but not acyl-CoA or acyl-ACP. This chain is Glycerol-3-phosphate acyltransferase, found in Sinorhizobium fredii (strain NBRC 101917 / NGR234).